The sequence spans 373 residues: Flagellar P-ring protein (373 aa).

The first 30 residues, 1–30, serve as a signal peptide directing secretion; sequence MTNRWSFDVNKNLVTVLFTWLCLSISTAHA.

The protein belongs to the FlgI family. In terms of assembly, the basal body constitutes a major portion of the flagellar organelle and consists of four rings (L,P,S, and M) mounted on a central rod.

The protein localises to the periplasm. It is found in the bacterial flagellum basal body. In terms of biological role, assembles around the rod to form the L-ring and probably protects the motor/basal body from shearing forces during rotation. The chain is Flagellar P-ring protein from Aliivibrio fischeri (strain ATCC 700601 / ES114) (Vibrio fischeri).